We begin with the raw amino-acid sequence, 893 residues long: UPF0182 protein CLI_0022 (893 aa).

7 consecutive transmembrane segments (helical) span residues 9–29 (IPLFIIILFIAFFNKIINFII), 49–69 (AIIILMIPIFIIFFISIWMYY), 94–114 (LFFIFNFIVSIFLAYIFSSSY), 154–174 (VIISLLLFLVITTFIAYFILE), 202–222 (LAIVSGLIILFISFGHLIKIW), 246–266 (FYKIIVVITLISSIVTLLSIV), and 273–293 (VSICIGITIFLIVSQNIASFL).

It belongs to the UPF0182 family.

The protein resides in the cell membrane. This Clostridium botulinum (strain Langeland / NCTC 10281 / Type F) protein is UPF0182 protein CLI_0022.